The chain runs to 441 residues: Protein translocase subunit SecY (441 aa).

Helical transmembrane passes span 18-38 (ILFT…PSPG), 78-98 (AVGV…TVVI), 124-144 (IALA…GGLL), 157-177 (IFTL…VMWM), 180-200 (LITE…GIAA), 215-235 (GVVF…VVFV), 272-292 (VIPV…TQLI), 318-338 (LVYI…YVSI), 382-402 (IYLG…AGGT), and 403-423 (VQNL…GLDT).

Belongs to the SecY/SEC61-alpha family. In terms of assembly, component of the Sec protein translocase complex. Heterotrimer consisting of SecY, SecE and SecG subunits. The heterotrimers can form oligomers, although 1 heterotrimer is thought to be able to translocate proteins. Interacts with the ribosome. Interacts with SecDF, and other proteins may be involved. Interacts with SecA.

The protein resides in the cell membrane. Functionally, the central subunit of the protein translocation channel SecYEG. Consists of two halves formed by TMs 1-5 and 6-10. These two domains form a lateral gate at the front which open onto the bilayer between TMs 2 and 7, and are clamped together by SecE at the back. The channel is closed by both a pore ring composed of hydrophobic SecY resides and a short helix (helix 2A) on the extracellular side of the membrane which forms a plug. The plug probably moves laterally to allow the channel to open. The ring and the pore may move independently. The sequence is that of Protein translocase subunit SecY from Mycobacterium bovis (strain ATCC BAA-935 / AF2122/97).